The primary structure comprises 207 residues: Small ribosomal subunit protein uS4 (207 aa).

The span at 29–38 (SDKAKFDSKP) shows a compositional bias: basic and acidic residues. The tract at residues 29-54 (SDKAKFDSKPGQHGRTSGTRTSDYGL) is disordered. A compositionally biased stretch (polar residues) spans 42–52 (GRTSGTRTSDY). An S4 RNA-binding domain is found at 97-160 (SRLDNVVYRM…KKQTRIAEAL (64 aa)).

It belongs to the universal ribosomal protein uS4 family. As to quaternary structure, part of the 30S ribosomal subunit. Contacts protein S5. The interaction surface between S4 and S5 is involved in control of translational fidelity.

Functionally, one of the primary rRNA binding proteins, it binds directly to 16S rRNA where it nucleates assembly of the body of the 30S subunit. With S5 and S12 plays an important role in translational accuracy. This Polaromonas naphthalenivorans (strain CJ2) protein is Small ribosomal subunit protein uS4.